Reading from the N-terminus, the 314-residue chain is 2-methoxy-6-polyprenyl-1,4-benzoquinol methylase, mitochondrial (314 aa).

The transit peptide at Met1–Arg19 directs the protein to the mitochondrion. S-adenosyl-L-methionine-binding positions include Thr109, Asp154, Asn186 to Ser187, and Ser203.

The protein belongs to the class I-like SAM-binding methyltransferase superfamily. MenG/UbiE family. Component of a multi-subunit COQ enzyme complex.

It is found in the mitochondrion inner membrane. It carries out the reaction a 2-methoxy-6-(all-trans-polyprenyl)benzene-1,4-diol + S-adenosyl-L-methionine = a 5-methoxy-2-methyl-3-(all-trans-polyprenyl)benzene-1,4-diol + S-adenosyl-L-homocysteine + H(+). It functions in the pathway cofactor biosynthesis; ubiquinone biosynthesis. In terms of biological role, methyltransferase required for the conversion of 2-polyprenyl-6-methoxy-1,4-benzoquinol (DDMQH2) to 2-polyprenyl-3-methyl-6-methoxy-1,4-benzoquinol (DMQH2). This chain is 2-methoxy-6-polyprenyl-1,4-benzoquinol methylase, mitochondrial, found in Dictyostelium discoideum (Social amoeba).